The primary structure comprises 208 residues: Uracil phosphoribosyltransferase (208 aa).

Residues arginine 78, arginine 103, and 130 to 138 (DPMLATGGS) each bind 5-phospho-alpha-D-ribose 1-diphosphate. Residues isoleucine 193 and 198-200 (GDA) contribute to the uracil site. Aspartate 199 serves as a coordination point for 5-phospho-alpha-D-ribose 1-diphosphate.

Belongs to the UPRTase family. The cofactor is Mg(2+).

It catalyses the reaction UMP + diphosphate = 5-phospho-alpha-D-ribose 1-diphosphate + uracil. Its pathway is pyrimidine metabolism; UMP biosynthesis via salvage pathway; UMP from uracil: step 1/1. Its activity is regulated as follows. Allosterically activated by GTP. Its function is as follows. Catalyzes the conversion of uracil and 5-phospho-alpha-D-ribose 1-diphosphate (PRPP) to UMP and diphosphate. This chain is Uracil phosphoribosyltransferase, found in Shewanella frigidimarina (strain NCIMB 400).